Here is a 156-residue protein sequence, read N- to C-terminus: Transcription antitermination protein NusB (156 aa).

The protein belongs to the NusB family.

In terms of biological role, involved in transcription antitermination. Required for transcription of ribosomal RNA (rRNA) genes. Binds specifically to the boxA antiterminator sequence of the ribosomal RNA (rrn) operons. The protein is Transcription antitermination protein NusB of Rickettsia conorii (strain ATCC VR-613 / Malish 7).